The chain runs to 205 residues: Large ribosomal subunit protein uL4 (205 aa).

Residues arginine 43–aspartate 77 form a disordered region. Positions lysine 63 to alanine 73 are enriched in basic residues.

It belongs to the universal ribosomal protein uL4 family. As to quaternary structure, part of the 50S ribosomal subunit.

In terms of biological role, one of the primary rRNA binding proteins, this protein initially binds near the 5'-end of the 23S rRNA. It is important during the early stages of 50S assembly. It makes multiple contacts with different domains of the 23S rRNA in the assembled 50S subunit and ribosome. Functionally, forms part of the polypeptide exit tunnel. The chain is Large ribosomal subunit protein uL4 from Desulfosudis oleivorans (strain DSM 6200 / JCM 39069 / Hxd3) (Desulfococcus oleovorans).